Reading from the N-terminus, the 333-residue chain is Delta(9)-fatty-acid desaturase fat-5 (333 aa).

Transmembrane regions (helical) follow at residues 42 to 62 (NVAL…QLVF), 66 to 86 (WATV…VTGG), 187 to 207 (LPLV…VLWG), and 210 to 230 (AFIA…HATW).

The protein belongs to the fatty acid desaturase type 1 family. In terms of tissue distribution, expressed in the intestine in adult worms and in all four larval stages. Additional expression in the pharynx and tail cells after hatching and throughout the lifespan.

It is found in the membrane. The enzyme catalyses hexadecanoyl-CoA + 2 Fe(II)-[cytochrome b5] + O2 + 2 H(+) = (9Z)-hexadecenoyl-CoA + 2 Fe(III)-[cytochrome b5] + 2 H2O. It carries out the reaction tetradecanoyl-CoA + 2 Fe(II)-[cytochrome b5] + O2 + 2 H(+) = (9Z)-tetradecenoyl-CoA + 2 Fe(III)-[cytochrome b5] + 2 H2O. It catalyses the reaction heptadecanoyl-CoA + 2 Fe(II)-[cytochrome b5] + O2 + 2 H(+) = (9Z)-heptadecenoyl-CoA + 2 Fe(III)-[cytochrome b5] + 2 H2O. The catalysed reaction is pentadecanoyl-CoA + 2 Fe(II)-[cytochrome b5] + O2 + 2 H(+) = (9Z)-pentadecenoyl-CoA + 2 Fe(III)-[cytochrome b5] + 2 H2O. The protein operates within lipid metabolism; monounsaturated fatty acid biosynthesis. Delta(9)-fatty acid desaturase that acts preferentially on palmitoyl-CoA (hexadecanoyl-CoA) producing the monounsaturated palmitoleoyl-CoA ((9Z)-hexadecenoyl-CoA), which can be elongated to (11Z)-octadecenoyl-CoA (the most abundant monounsaturated fatty acid in Caenorhabditis elegans phospholipids and triacylglycerols). Also acts on pentadecanoyl-CoA, heptadecanoyl-CoA and myristoyl-CoA (tetradecanoyl-CoA), the monounsaturated fatty acids (MUFAs) produced are further used as substrates to synthesize polyunsaturated fatty acids (PUFAs) by several other desaturases and elongases. Unlike plants, Caenorhabditis elegans desaturases seem to use fatty acyl-CoAs as substrates. The sequence is that of Delta(9)-fatty-acid desaturase fat-5 (fat-5) from Caenorhabditis elegans.